We begin with the raw amino-acid sequence, 124 residues long: Small ribosomal subunit protein uS10 (124 aa).

Belongs to the universal ribosomal protein uS10 family.

This is Small ribosomal subunit protein uS10 (rps20) from Dictyostelium discoideum (Social amoeba).